A 239-amino-acid chain; its full sequence is tRNA (guanine-N(1)-)-methyltransferase (239 aa).

S-adenosyl-L-methionine-binding positions include Gly-108 and 127-132 (IGDYVL).

Belongs to the RNA methyltransferase TrmD family. In terms of assembly, homodimer.

The protein localises to the cytoplasm. It catalyses the reaction guanosine(37) in tRNA + S-adenosyl-L-methionine = N(1)-methylguanosine(37) in tRNA + S-adenosyl-L-homocysteine + H(+). Functionally, specifically methylates guanosine-37 in various tRNAs. In Lactobacillus helveticus (strain DPC 4571), this protein is tRNA (guanine-N(1)-)-methyltransferase.